Here is a 241-residue protein sequence, read N- to C-terminus: Uridylate kinase (241 aa).

14–17 (KLSG) contributes to the ATP binding site. An involved in allosteric activation by GTP region spans residues 22-27 (GNQGFG). Residue G56 coordinates UMP. Residues G57 and R61 each coordinate ATP. UMP contacts are provided by residues D76 and 137 to 144 (TGNPYFTT). Positions 164, 170, and 173 each coordinate ATP.

It belongs to the UMP kinase family. As to quaternary structure, homohexamer.

It is found in the cytoplasm. It catalyses the reaction UMP + ATP = UDP + ADP. It participates in pyrimidine metabolism; CTP biosynthesis via de novo pathway; UDP from UMP (UMPK route): step 1/1. With respect to regulation, allosterically activated by GTP. Inhibited by UTP. Catalyzes the reversible phosphorylation of UMP to UDP. This chain is Uridylate kinase, found in Syntrophotalea carbinolica (strain DSM 2380 / NBRC 103641 / GraBd1) (Pelobacter carbinolicus).